The primary structure comprises 568 residues: TWiK family of potassium channels protein 9 (568 aa).

Over 1 to 15 (MKCSFHIPEKYQWAS) the chain is Cytoplasmic. The chain crosses the membrane as a helical span at residues 16-36 (TLFVHVALIAGVAVYTVFGAL). An intramembrane region (pore-forming) is located at residues 163–183 (IGNSVIFAFTVITTIGYGHVA). Residues 191–211 (LFLIFYGVIGVPFTLLTIADL) traverse the membrane as a helical segment. Residues 212–316 (GMFLTRFLKN…NNEPRKTEES (105 aa)) lie on the Cytoplasmic side of the membrane. Disordered regions lie at residues 243 to 262 (QRNK…RSEV) and 274 to 314 (MRTA…RKTE). Residues 297–307 (GKEEDEEEPEN) are compositionally biased toward acidic residues. Residues 317–337 (IALGITFTCYLVAGAKILSVY) traverse the membrane as a helical segment. The pore-forming intramembrane region spans 343–363 (FFKALYFNFVTLTTIGLGDFV). Residues 370-390 (LLITLIYIGIGLALTTMAIEI) traverse the membrane as a helical segment. The Cytoplasmic segment spans residues 391-568 (AADLLKKLHY…LRTYTNARRK (178 aa)).

The protein belongs to the two pore domain potassium channel (TC 1.A.1.8) family. Expressed in ray A-type neurons and cell bodies. Also seen in head, pharyngeal and phasmid neurons, and in coelomocytes.

The protein resides in the membrane. Potassium channel protein that may be component of regulatory network that controls ray development and function. The protein is TWiK family of potassium channels protein 9 (twk-9) of Caenorhabditis elegans.